Here is a 318-residue protein sequence, read N- to C-terminus: NADH-ubiquinone oxidoreductase chain 1 (318 aa).

8 helical membrane passes run 3–23 (LINL…LTLL), 69–89 (MLFI…WTPL), 102–122 (MLFI…SGWA), 144–164 (VTLA…TLLS), 171–191 (YIWL…STLA), 222–242 (LFFL…IILF), 253–273 (ELYT…FLWI), and 294–314 (LPLT…LAGI).

The protein belongs to the complex I subunit 1 family. Core subunit of respiratory chain NADH dehydrogenase (Complex I) which is composed of 45 different subunits.

The protein resides in the mitochondrion inner membrane. The catalysed reaction is a ubiquinone + NADH + 5 H(+)(in) = a ubiquinol + NAD(+) + 4 H(+)(out). Functionally, core subunit of the mitochondrial membrane respiratory chain NADH dehydrogenase (Complex I) which catalyzes electron transfer from NADH through the respiratory chain, using ubiquinone as an electron acceptor. Essential for the catalytic activity and assembly of complex I. In Murina florium (Flores tube-nosed bat), this protein is NADH-ubiquinone oxidoreductase chain 1 (MT-ND1).